The chain runs to 474 residues: tRNA-2-methylthio-N(6)-dimethylallyladenosine synthase (474 aa).

In terms of domain architecture, MTTase N-terminal spans 3–120 (KKLHIKTWGC…LPEMINSVRG (118 aa)). 6 residues coordinate [4Fe-4S] cluster: cysteine 12, cysteine 49, cysteine 83, cysteine 157, cysteine 161, and cysteine 164. The 233-residue stretch at 143–375 (RAEGPTAFVS…QERINQQAMA (233 aa)) folds into the Radical SAM core domain. The TRAM domain maps to 378 to 441 (RRMLGTTQRI…PNSLRGKVVR (64 aa)).

The protein belongs to the methylthiotransferase family. MiaB subfamily. As to quaternary structure, monomer. [4Fe-4S] cluster is required as a cofactor.

The protein localises to the cytoplasm. The enzyme catalyses N(6)-dimethylallyladenosine(37) in tRNA + (sulfur carrier)-SH + AH2 + 2 S-adenosyl-L-methionine = 2-methylsulfanyl-N(6)-dimethylallyladenosine(37) in tRNA + (sulfur carrier)-H + 5'-deoxyadenosine + L-methionine + A + S-adenosyl-L-homocysteine + 2 H(+). In terms of biological role, catalyzes the methylthiolation of N6-(dimethylallyl)adenosine (i(6)A), leading to the formation of 2-methylthio-N6-(dimethylallyl)adenosine (ms(2)i(6)A) at position 37 in tRNAs that read codons beginning with uridine. The protein is tRNA-2-methylthio-N(6)-dimethylallyladenosine synthase of Escherichia coli (strain UTI89 / UPEC).